A 63-amino-acid polypeptide reads, in one-letter code: Large ribosomal subunit protein uL29 (63 aa).

It belongs to the universal ribosomal protein uL29 family.

This is Large ribosomal subunit protein uL29 from Shigella flexneri.